The chain runs to 645 residues: Matrix metalloproteinase-24 (645 aa).

The span at 1–10 shows a compositional bias: low complexity; sequence MPRSRGGRAA. The tract at residues 1-26 is disordered; the sequence is MPRSRGGRAAPGPPPPPPPPGQAPRW. Positions 1-52 are cleaved as a signal peptide; the sequence is MPRSRGGRAAPGPPPPPPPPGQAPRWSRWRVPGRLLLLLLPALCCLPGAARA. The segment covering 11 to 22 has biased composition (pro residues); it reads PGPPPPPPPPGQ. A propeptide spanning residues 53 to 155 is cleaved from the precursor; the sequence is AAAAAGAGNR…HLSRRRRNKR (103 aa). The Extracellular portion of the chain corresponds to 53-602; it reads AAAAAGAGNR…INDVPGSVNA (550 aa). Residues 137–144 carry the Cysteine switch motif; it reads PRCGVPDH. Zn(2+) is bound by residues Cys139 and His282. The active site involves Glu283. Zn(2+) is bound by residues His286 and His292. Positions 323–380 are disordered; sequence QKIYGPPAEPLEPTRPLPTLPVRRIHSPSERKHERQPRPPRPPLGDRPSTPGTKPNIC. Residues 329–341 are compositionally biased toward pro residues; it reads PAEPLEPTRPLPT. Residues 349 to 359 are compositionally biased toward basic and acidic residues; it reads SPSERKHERQP. Hemopexin repeat units lie at residues 377–425, 426–471, 473–521, and 522–569; these read PNIC…WKGL, PARI…GSCL, REGI…KGIP, and QAPQ…WMGC. An intrachain disulfide couples Cys380 to Cys569. A helical transmembrane segment spans residues 603-623; sequence VAVVIPCILSLCILVLVYTIF. Residues 624-645 are Cytoplasmic-facing; that stretch reads QFKNKTGPQPVTYYKRPVQEWV. The short motif at 643-645 is the PDZ-binding element; the sequence is EWV.

This sequence belongs to the peptidase M10A family. Interacts (via PDZ-binding motif) with APBA3 (via PDZ domain). Interacts with GRIP1 and GRIP2. It depends on Zn(2+) as a cofactor. Ca(2+) is required as a cofactor. Cleaved by a furin endopeptidase in the trans-Golgi network. Predominantly expressed in brain, kidney, pancreas and lung. Overexpressed in a series of brain tumors, including astrocytomas and glioblastomas.

The protein localises to the cell membrane. Its subcellular location is the golgi apparatus. It localises to the trans-Golgi network membrane. The protein resides in the secreted. It is found in the extracellular space. The protein localises to the extracellular matrix. Its function is as follows. Metalloprotease that mediates cleavage of N-cadherin (CDH2) and acts as a regulator of neuro-immune interactions and neural stem cell quiescence. Involved in cell-cell interactions between nociceptive neurites and mast cells, possibly by mediating cleavage of CDH2, thereby acting as a mediator of peripheral thermal nociception and inflammatory hyperalgesia. Key regulator of neural stem cells quiescence by mediating cleavage of CDH2, affecting CDH2-mediated anchorage of neural stem cells to ependymocytes in the adult subependymal zone, leading to modulate their quiescence. May play a role in axonal growth. Able to activate progelatinase A. May also be a proteoglycanase involved in degradation of proteoglycans, such as dermatan sulfate and chondroitin sulfate proteoglycans. Cleaves partially fibronectin, but not collagen type I, nor laminin. This Homo sapiens (Human) protein is Matrix metalloproteinase-24 (MMP24).